Here is a 188-residue protein sequence, read N- to C-terminus: MSRQTTIPLRERNIILIGFMGAGKTTIGQLVAKKLYRDFIDVDAEIERRQGMSIPELFAQKGEAYFRKVERELIVDLCTNTRLKILSLGGGAYLQEDVRRACLAHGIVFFLDLSWEHWKEERLPLIVDSRPVLKNKTLEEVEQLFFQRQSAYALHHSRVVLNELEAEQAAEQIVESIKWTWDVYEPNR.

Residue 21-26 participates in ATP binding; sequence GAGKTT. Thr25 is a binding site for Mg(2+). 3 residues coordinate substrate: Asp43, Arg67, and Gly90. Arg130 contacts ATP. Substrate is bound at residue Arg148.

It belongs to the shikimate kinase family. As to quaternary structure, monomer. The cofactor is Mg(2+).

Its subcellular location is the cytoplasm. The catalysed reaction is shikimate + ATP = 3-phosphoshikimate + ADP + H(+). Its pathway is metabolic intermediate biosynthesis; chorismate biosynthesis; chorismate from D-erythrose 4-phosphate and phosphoenolpyruvate: step 5/7. Its function is as follows. Catalyzes the specific phosphorylation of the 3-hydroxyl group of shikimic acid using ATP as a cosubstrate. In Geobacillus kaustophilus (strain HTA426), this protein is Shikimate kinase.